Reading from the N-terminus, the 88-residue chain is Small ribosomal subunit protein uS17 (88 aa).

It belongs to the universal ribosomal protein uS17 family. As to quaternary structure, part of the 30S ribosomal subunit.

Its function is as follows. One of the primary rRNA binding proteins, it binds specifically to the 5'-end of 16S ribosomal RNA. This chain is Small ribosomal subunit protein uS17, found in Stutzerimonas stutzeri (strain A1501) (Pseudomonas stutzeri).